The following is a 237-amino-acid chain: Phosphoribosylaminoimidazole-succinocarboxamide synthase (237 aa).

Belongs to the SAICAR synthetase family.

The catalysed reaction is 5-amino-1-(5-phospho-D-ribosyl)imidazole-4-carboxylate + L-aspartate + ATP = (2S)-2-[5-amino-1-(5-phospho-beta-D-ribosyl)imidazole-4-carboxamido]succinate + ADP + phosphate + 2 H(+). The protein operates within purine metabolism; IMP biosynthesis via de novo pathway; 5-amino-1-(5-phospho-D-ribosyl)imidazole-4-carboxamide from 5-amino-1-(5-phospho-D-ribosyl)imidazole-4-carboxylate: step 1/2. This is Phosphoribosylaminoimidazole-succinocarboxamide synthase from Methanosarcina acetivorans (strain ATCC 35395 / DSM 2834 / JCM 12185 / C2A).